A 109-amino-acid chain; its full sequence is MSAQPVDIQIFGRSLRVNCPPEQRDALNQAADELNQRLQDLKVRTRVTNTEQLVFIAALNICYELAQEKVKTRDYAANMEQRIRMLQQTIEQALLEQGRISERAEPKFE.

Positions 21–99 (PEQRDALNQA…IEQALLEQGR (79 aa)) form a coiled coil.

It belongs to the ZapA family. Type 1 subfamily. Homodimer. Interacts with FtsZ.

Its subcellular location is the cytoplasm. In terms of biological role, activator of cell division through the inhibition of FtsZ GTPase activity, therefore promoting FtsZ assembly into bundles of protofilaments necessary for the formation of the division Z ring. It is recruited early at mid-cell but it is not essential for cell division. This chain is Cell division protein ZapA, found in Cronobacter sakazakii (strain ATCC BAA-894) (Enterobacter sakazakii).